Reading from the N-terminus, the 186-residue chain is dCTP deaminase, dUMP-forming (186 aa).

Residues 99-104 (KSSIAR), D117, 125-127 (TLE), Q146, Y159, K166, and Q170 contribute to the dCTP site. E127 serves as the catalytic Proton donor/acceptor.

It belongs to the dCTP deaminase family. In terms of assembly, homotrimer.

The catalysed reaction is dCTP + 2 H2O = dUMP + NH4(+) + diphosphate. It participates in pyrimidine metabolism; dUMP biosynthesis; dUMP from dCTP: step 1/1. Its function is as follows. Bifunctional enzyme that catalyzes both the deamination of dCTP to dUTP and the hydrolysis of dUTP to dUMP without releasing the toxic dUTP intermediate. This is dCTP deaminase, dUMP-forming from Methanosphaerula palustris (strain ATCC BAA-1556 / DSM 19958 / E1-9c).